Reading from the N-terminus, the 153-residue chain is Proline-rich membrane anchor 1 (153 aa).

The N-terminal stretch at 1-35 (MLLRDLVLRRGCCWSSLLLHCALHPLWGFVQVTHG) is a signal peptide. Residues 36-92 (EPQKSCSKVTDSCRHVCQCRPPPPLPPPPPPPPPPRLLSAPAPNSTSCPTEESWWSG) lie on the Extracellular side of the membrane. Residues 56 to 70 (PPPPLPPPPPPPPPP) form the PRAD domain. A compositionally biased stretch (pro residues) spans 59-71 (PLPPPPPPPPPPR). Positions 59–79 (PLPPPPPPPPPPRLLSAPAPN) are disordered. N-linked (GlcNAc...) asparagine glycosylation occurs at asparagine 79. Residues 93–113 (LVIIIAVCCASLVFLTVLVII) form a helical membrane-spanning segment. Residues 114 to 153 (CYKAIKRKPLRKDENGTSVAEYPMSASQSNKGVDVNNAVV) lie on the Cytoplasmic side of the membrane.

Interacts with ACHE, probably through disulfide bonds.

The protein localises to the cell membrane. It localises to the cell junction. Its subcellular location is the synapse. Its function is as follows. Required to anchor acetylcholinesterase (ACHE) to the basal lamina of the neuromuscular junction and to the membrane of neuronal synapses in brain. Also able to organize ACHE into tetramers. The polypeptide is Proline-rich membrane anchor 1 (PRIMA1) (Homo sapiens (Human)).